The sequence spans 569 residues: Endo-1,4-beta-xylanase 5 (569 aa).

Positions 1-25 (MKNINNGFFLCMLLLLWCFVHSGIS) are cleaved as a signal peptide. Asn-197, Asn-261, and Asn-307 each carry an N-linked (GlcNAc...) asparagine glycan. A GH10 domain is found at 209-500 (EQTKPSFLLG…NTATGDVIDK (292 aa)). Glu-332 functions as the Proton donor in the catalytic mechanism. N-linked (GlcNAc...) asparagine glycosylation occurs at Asn-346. The active-site Nucleophile is Glu-439. Residues Asn-490, Asn-536, and Asn-544 are each glycosylated (N-linked (GlcNAc...) asparagine).

The protein belongs to the glycosyl hydrolase 10 (cellulase F) family.

The catalysed reaction is Endohydrolysis of (1-&gt;4)-beta-D-xylosidic linkages in xylans.. It functions in the pathway glycan degradation; xylan degradation. Binds to and hydrolyzes insoluble and soluble xylan substrates. The chain is Endo-1,4-beta-xylanase 5 from Arabidopsis thaliana (Mouse-ear cress).